Reading from the N-terminus, the 580-residue chain is Glypican-3 (580 aa).

Residues 1 to 24 (MAGTVRTACLVVAMLLSLDFPGQA) form the signal peptide. Q25 carries the post-translational modification Pyrrolidone carboxylic acid. 7 cysteine pairs are disulfide-bonded: C35–C72, C65–C262, C73–C265, C197–C349, C252–C285, C274–C422, and C278–C410. N124 and N241 each carry an N-linked (GlcNAc...) asparagine glycan. S352 carries the phosphoserine; by FAM20C modification. N418 carries N-linked (GlcNAc...) asparagine glycosylation. O-linked (Xyl...) (glycosaminoglycan) serine glycans are attached at residues S495 and S509. Residue N554 is the site of GPI-anchor amidated asparagine attachment. The propeptide at 555 to 580 (LGNVHSPLKLLTSMAISVVCFFFLVH) is removed in mature form.

Belongs to the glypican family. In terms of assembly, heterodimer; disulfide-linked. Cleavage by a furin-like convertase results in production of alpha and beta chains which form a disulfide-linked heterodimer. Interacts with DPP4. Interacts with FGF2. Interacts with WNT5A. Also interacts with WNT3A and WNT7B. Interacts with hedgehog protein SHH; the heparan sulfate chains are not required for the interaction. Also interacts with hedgehog protein IHH. Interacts with CD81. Interacts with Wnt receptors FZD4, FZD7 and FZD8; the heparan sulfate chains are required for the interaction. Post-translationally, O-glycosylated; contains heparan sulfate and/or chondroitin sulfate. Cleaved intracellularly by a furin-like convertase to generate 2 subunits, alpha and beta, which remain associated through disulfide bonds and are associated with the cell surface via the GPI-anchor. This processing is essential for its role in inhibition of hedgehog signaling. A second proteolytic event may result in cleavage of the protein on the cell surface, separating it from the GPI-anchor and leading to its shedding from the cell surface. As to expression, detected in placenta (at protein level). Highly expressed in lung, liver and kidney.

It is found in the cell membrane. Its function is as follows. Cell surface proteoglycan. Negatively regulates the hedgehog signaling pathway when attached via the GPI-anchor to the cell surface by competing with the hedgehog receptor PTC1 for binding to hedgehog proteins. Binding to the hedgehog protein SHH triggers internalization of the complex by endocytosis and its subsequent lysosomal degradation. Positively regulates the canonical Wnt signaling pathway by binding to the Wnt receptor Frizzled and stimulating the binding of the Frizzled receptor to Wnt ligands. Positively regulates the non-canonical Wnt signaling pathway. Binds to CD81 which decreases the availability of free CD81 for binding to the transcriptional repressor HHEX, resulting in nuclear translocation of HHEX and transcriptional repression. Inhibits the dipeptidyl peptidase activity of DPP4. Plays a role in limb patterning and skeletal development by controlling the cellular response to BMP4. Modulates the effects of growth factors BMP2, BMP7 and FGF7 on renal branching morphogenesis. Required for coronary vascular development. Plays a role in regulating cell movements during gastrulation. In Homo sapiens (Human), this protein is Glypican-3 (GPC3).